The sequence spans 109 residues: Large ribosomal subunit protein uL22 (109 aa).

Belongs to the universal ribosomal protein uL22 family. Part of the 50S ribosomal subunit.

Its function is as follows. This protein binds specifically to 23S rRNA; its binding is stimulated by other ribosomal proteins, e.g. L4, L17, and L20. It is important during the early stages of 50S assembly. It makes multiple contacts with different domains of the 23S rRNA in the assembled 50S subunit and ribosome. In terms of biological role, the globular domain of the protein is located near the polypeptide exit tunnel on the outside of the subunit, while an extended beta-hairpin is found that lines the wall of the exit tunnel in the center of the 70S ribosome. The protein is Large ribosomal subunit protein uL22 of Azoarcus sp. (strain BH72).